The following is a 555-amino-acid chain: Formate--tetrahydrofolate ligase (555 aa).

ATP is bound at residue Thr-65–Thr-72.

This sequence belongs to the formate--tetrahydrofolate ligase family.

The enzyme catalyses (6S)-5,6,7,8-tetrahydrofolate + formate + ATP = (6R)-10-formyltetrahydrofolate + ADP + phosphate. It participates in one-carbon metabolism; tetrahydrofolate interconversion. This chain is Formate--tetrahydrofolate ligase, found in Paracoccus denitrificans (strain Pd 1222).